The chain runs to 348 residues: MAIVSSSSGRKPPRRPEALMDPQQAPEEVVSRPEDKLRPQRLDDYIGQSELKQVLGIAVQAALGRGDALDHVLLYGPPGLGKTTMAMVLAEEMGVHCKVTSAPALERPRDIVGLLVNLQPRDLLFIDEIHRLSRVAEELLYPAMEDRRLDLTVGKGSTARTRSLDLPPFTLVGATTRAGSLSSPLRDRFGLIQRLEFYGQGDLEAIVERTAGLIGVTLTPQARSSIAASCRGTPRIANRLLRRVRDVASVRGGGGGAINQALVGEALSLHRVDHRGLDASDRRLLQLLIDHHGGGPVGLETLAAALGDDPVTLETVVEPFLMQQGLLMRTPRGRMVTDAARSHLAEAA.

Low complexity predominate over residues 1–10 (MAIVSSSSGR). The disordered stretch occupies residues 1-37 (MAIVSSSSGRKPPRRPEALMDPQQAPEEVVSRPEDKL). The segment at 13–198 (PRRPEALMDP…FGLIQRLEFY (186 aa)) is large ATPase domain (RuvB-L). The ATP site is built by Leu37, Arg38, Gly79, Lys82, Thr83, Thr84, Arg188, Tyr198, and Arg235. A Mg(2+)-binding site is contributed by Thr83. The interval 199–271 (GQGDLEAIVE…LVGEALSLHR (73 aa)) is small ATPAse domain (RuvB-S). The interval 274 to 348 (HRGLDASDRR…AARSHLAEAA (75 aa)) is head domain (RuvB-H). Residues Arg329 and Arg334 each coordinate DNA.

It belongs to the RuvB family. Homohexamer. Forms an RuvA(8)-RuvB(12)-Holliday junction (HJ) complex. HJ DNA is sandwiched between 2 RuvA tetramers; dsDNA enters through RuvA and exits via RuvB. An RuvB hexamer assembles on each DNA strand where it exits the tetramer. Each RuvB hexamer is contacted by two RuvA subunits (via domain III) on 2 adjacent RuvB subunits; this complex drives branch migration. In the full resolvosome a probable DNA-RuvA(4)-RuvB(12)-RuvC(2) complex forms which resolves the HJ.

The protein resides in the cytoplasm. The catalysed reaction is ATP + H2O = ADP + phosphate + H(+). Functionally, the RuvA-RuvB-RuvC complex processes Holliday junction (HJ) DNA during genetic recombination and DNA repair, while the RuvA-RuvB complex plays an important role in the rescue of blocked DNA replication forks via replication fork reversal (RFR). RuvA specifically binds to HJ cruciform DNA, conferring on it an open structure. The RuvB hexamer acts as an ATP-dependent pump, pulling dsDNA into and through the RuvAB complex. RuvB forms 2 homohexamers on either side of HJ DNA bound by 1 or 2 RuvA tetramers; 4 subunits per hexamer contact DNA at a time. Coordinated motions by a converter formed by DNA-disengaged RuvB subunits stimulates ATP hydrolysis and nucleotide exchange. Immobilization of the converter enables RuvB to convert the ATP-contained energy into a lever motion, pulling 2 nucleotides of DNA out of the RuvA tetramer per ATP hydrolyzed, thus driving DNA branch migration. The RuvB motors rotate together with the DNA substrate, which together with the progressing nucleotide cycle form the mechanistic basis for DNA recombination by continuous HJ branch migration. Branch migration allows RuvC to scan DNA until it finds its consensus sequence, where it cleaves and resolves cruciform DNA. This chain is Holliday junction branch migration complex subunit RuvB, found in Synechococcus sp. (strain CC9605).